The chain runs to 34 residues: Brevinin-2Ec (34 aa).

Residues Cys28 and Cys34 are joined by a disulfide bond.

This sequence belongs to the frog skin active peptide (FSAP) family. Brevinin subfamily. Expressed by the skin glands.

It localises to the secreted. Shows antibacterial activity against representative Gram-negative and Gram-positive bacterial species, and hemolytic activity. The polypeptide is Brevinin-2Ec (Pelophylax lessonae (Pool frog)).